Reading from the N-terminus, the 313-residue chain is Protein FixB (313 aa).

FAD is bound at residue 255-283 (LYLAVGISGQIQHMVGANASQTIFAINKD).

This sequence belongs to the ETF alpha-subunit/FixB family. In terms of assembly, heterodimer of FixA and FixB.

It functions in the pathway amine and polyamine metabolism; carnitine metabolism. Required for anaerobic carnitine reduction. May bring reductant to CaiA. In Escherichia coli (strain K12 / MC4100 / BW2952), this protein is Protein FixB.